Consider the following 278-residue polypeptide: Transmembrane protein 41B (278 aa).

Residues 1–31 (MQVHERSHTGGHTCQCNHGSEKKAPATGKVH) are disordered. Transmembrane regions (helical) follow at residues 39–59 (MSLL…FLVY), 96–116 (FYVE…TFAI), 132–154 (FPLA…YLLS), 184–204 (LINY…FINI), 212–232 (PLKV…FVAI), and 249–269 (SWNS…PAIF). The segment at 127–238 (GFLYPFPLAL…FVAIKAGTTL (112 aa)) is VTT domain; required for its function in autophagy.

The protein belongs to the TMEM41 family.

The protein resides in the endoplasmic reticulum membrane. It localises to the endomembrane system. The enzyme catalyses a 1,2-diacyl-sn-glycero-3-phospho-L-serine(in) = a 1,2-diacyl-sn-glycero-3-phospho-L-serine(out). The catalysed reaction is cholesterol(in) = cholesterol(out). It catalyses the reaction a 1,2-diacyl-sn-glycero-3-phosphocholine(in) = a 1,2-diacyl-sn-glycero-3-phosphocholine(out). It carries out the reaction a 1,2-diacyl-sn-glycero-3-phosphoethanolamine(in) = a 1,2-diacyl-sn-glycero-3-phosphoethanolamine(out). Functionally, phospholipid scramblase involved in lipid homeostasis and membrane dynamics processes. Has phospholipid scramblase activity toward cholesterol and phosphatidylserine, as well as phosphatidylethanolamine and phosphatidylcholine. Required for autophagosome formation: participates in early stages of autophagosome biogenesis at the endoplasmic reticulum (ER) membrane by reequilibrating the leaflets of the ER as lipids are extracted by atg2 (atg2a or atg2b) to mediate autophagosome assembly. In addition to autophagy, involved in other processes in which phospholipid scramblase activity is required. Required for normal motor neuron development. This Xenopus tropicalis (Western clawed frog) protein is Transmembrane protein 41B.